Reading from the N-terminus, the 479-residue chain is 3-phytase B (479 aa).

Positions 1–19 (MPRTSLLTLACALATGASA) are cleaved as a signal peptide. His-82 acts as the Nucleophile in catalysis. 5 N-linked (GlcNAc...) asparagine glycosylation sites follow: Asn-106, Asn-191, Asn-227, Asn-250, and Asn-315. Residue Asp-338 is the Proton donor of the active site. Residues Asn-425, Asn-442, and Asn-458 are each glycosylated (N-linked (GlcNAc...) asparagine).

Belongs to the histidine acid phosphatase family.

The enzyme catalyses 1D-myo-inositol hexakisphosphate + H2O = 1D-myo-inositol 1,2,4,5,6-pentakisphosphate + phosphate. Its function is as follows. Catalyzes the hydrolysis of inorganic orthophosphate from phytate. The polypeptide is 3-phytase B (phyB) (Aspergillus niger).